Consider the following 118-residue polypeptide: Small ribosomal subunit protein uS13 (118 aa).

The disordered stretch occupies residues 94–118; sequence GLPVRGQRTKTNARTRKGPRKPIKK.

It belongs to the universal ribosomal protein uS13 family. In terms of assembly, part of the 30S ribosomal subunit. Forms a loose heterodimer with protein S19. Forms two bridges to the 50S subunit in the 70S ribosome.

Its function is as follows. Located at the top of the head of the 30S subunit, it contacts several helices of the 16S rRNA. In the 70S ribosome it contacts the 23S rRNA (bridge B1a) and protein L5 of the 50S subunit (bridge B1b), connecting the 2 subunits; these bridges are implicated in subunit movement. Contacts the tRNAs in the A and P-sites. The protein is Small ribosomal subunit protein uS13 of Edwardsiella ictaluri (strain 93-146).